Consider the following 393-residue polypeptide: Lipoyl synthase, mitochondrial (393 aa).

Positions 111, 116, 122, 142, 146, 149, and 357 each coordinate [4Fe-4S] cluster. One can recognise a Radical SAM core domain in the interval 127–346 (EHGTQTATIM…ETRGNELGFL (220 aa)).

The protein belongs to the radical SAM superfamily. Lipoyl synthase family. It depends on [4Fe-4S] cluster as a cofactor.

Its subcellular location is the mitochondrion. It catalyses the reaction [[Fe-S] cluster scaffold protein carrying a second [4Fe-4S](2+) cluster] + N(6)-octanoyl-L-lysyl-[protein] + 2 oxidized [2Fe-2S]-[ferredoxin] + 2 S-adenosyl-L-methionine + 4 H(+) = [[Fe-S] cluster scaffold protein] + N(6)-[(R)-dihydrolipoyl]-L-lysyl-[protein] + 4 Fe(3+) + 2 hydrogen sulfide + 2 5'-deoxyadenosine + 2 L-methionine + 2 reduced [2Fe-2S]-[ferredoxin]. The protein operates within protein modification; protein lipoylation via endogenous pathway; protein N(6)-(lipoyl)lysine from octanoyl-[acyl-carrier-protein]: step 2/2. Functionally, catalyzes the radical-mediated insertion of two sulfur atoms into the C-6 and C-8 positions of the octanoyl moiety bound to the lipoyl domains of lipoate-dependent enzymes, thereby converting the octanoylated domains into lipoylated derivatives. This is Lipoyl synthase, mitochondrial from Aedes aegypti (Yellowfever mosquito).